A 138-amino-acid polypeptide reads, in one-letter code: Acidic phospholipase A2 inhibitor chain HPD-1I (138 aa).

Positions Met1–Gly16 are cleaved as a signal peptide. 7 disulfide bridges follow: Cys42–Cys131, Cys44–Cys60, Cys59–Cys111, Cys65–Cys138, Cys66–Cys104, Cys73–Cys97, and Cys91–Cys102.

In terms of assembly, heterodimer of an acidic and a basic chain; non-covalently linked. The basic chain is toxic and has phospholipase A2 activity (chain HDP-1P (AC Q1RP79) or HDP-2P (AC Q1RP78)) and the acidic chain is non-toxic and functions as its inhibitor (chain HPD-1I). As to expression, expressed by the venom gland.

Its subcellular location is the secreted. In terms of biological role, heterodimer: slightly affects neuromuscular transmission acting presynaptically. It has a low catalytic activity, a low anticoagulant activity and weakly inhibits ADP-induced platelet aggregation. Functionally, monomer: has no activity (neurotoxic, catalytic, anticoagulant and a ADP-induced platelet aggregation), but inhibits phospholipase A2. The polypeptide is Acidic phospholipase A2 inhibitor chain HPD-1I (Vipera nikolskii (Nikolsky's adder)).